The chain runs to 911 residues: Protein transport protein SEC24-1 (911 aa).

Residues 108–123 (QPLPQQQQQQQQQQGP) are compositionally biased toward low complexity. Residues 108–130 (QPLPQQQQQQQQQQGPAKPPKPM) form a disordered region. Zn(2+) is bound by residues cysteine 226, cysteine 229, cysteine 248, and cysteine 251. The tract at residues 226–251 (CRRCRSYMNPFVHFNQDGRRWKCNIC) is zinc finger-like.

The protein belongs to the SEC23/SEC24 family. SEC24 subfamily. As to quaternary structure, the COPII coat is composed of at least 5 proteins: the SEC23/24 complex, the SEC13/31 complex, and the protein SAR1. Golgi apparatus membrane; Peripheral membrane protein; Cytoplasmic side.

The protein resides in the cytoplasm. It is found in the cytoplasmic vesicle. Its subcellular location is the COPII-coated vesicle membrane. It localises to the endoplasmic reticulum membrane. The protein localises to the golgi apparatus membrane. Its function is as follows. Component of the coat protein complex II (COPII) which promotes the formation of transport vesicles from the endoplasmic reticulum (ER). The coat has two main functions, the physical deformation of the endoplasmic reticulum membrane into vesicles and the selection of cargo molecules. This Naumovozyma castellii (Yeast) protein is Protein transport protein SEC24-1 (SEC241).